A 431-amino-acid chain; its full sequence is Glutamate--tRNA ligase 1 (431 aa).

A 'HIGH' region motif is present at residues 6–16 (PSPTGDMHIGN). The short motif at 235 to 239 (KMSKR) is the 'KMSKS' region element. Lys-238 is an ATP binding site.

It belongs to the class-I aminoacyl-tRNA synthetase family. Glutamate--tRNA ligase type 1 subfamily. In terms of assembly, monomer.

The protein resides in the cytoplasm. It catalyses the reaction tRNA(Glu) + L-glutamate + ATP = L-glutamyl-tRNA(Glu) + AMP + diphosphate. Catalyzes the attachment of glutamate to tRNA(Glu) in a two-step reaction: glutamate is first activated by ATP to form Glu-AMP and then transferred to the acceptor end of tRNA(Glu). The chain is Glutamate--tRNA ligase 1 from Campylobacter jejuni subsp. jejuni serotype O:23/36 (strain 81-176).